The following is a 262-amino-acid chain: Nurim (262 aa).

At 1–4 the chain is on the nuclear side; sequence MAPA. A helical transmembrane segment spans residues 5-28; it reads LLLVPAALASFILAFGTGVEFVRF. The Perinuclear space segment spans residues 29–58; it reads TSLRPLLGGIPESGGPDARQGWLAALQDRS. A helical transmembrane segment spans residues 59 to 80; the sequence is ILAPLAWDLGLLLLFVGQHSLM. At 81–97 the chain is on the nuclear side; it reads AAERVKAWTSRYFGVLQ. A helical transmembrane segment spans residues 98-114; the sequence is RSLYVACTALALQLVMR. At 115 to 133 the chain is on the perinuclear space side; that stretch reads YWEPIPKGPVLWEARAEPW. Residues 134–164 traverse the membrane as a helical segment; it reads ATWVPLLCFVLHVISWLLIFSILLVFDYAEL. Topologically, residues 165–191 are nuclear; the sequence is MGLKQVYYHVLGLGEPLALKSPRALRL. A helical membrane pass occupies residues 192–210; that stretch reads FSHLRHPVCVELLTVLWVV. The Perinuclear space portion of the chain corresponds to 211-216; that stretch reads PTLGTD. A helical membrane pass occupies residues 217–234; it reads RLLLAFLLTLYLGLAHGL. The Nuclear segment spans residues 235–262; that stretch reads DQQDLRYLRAQLQRKLHLLSRPQDGEAE.

The protein belongs to the nurim family.

The protein localises to the nucleus inner membrane. This is Nurim (NRM) from Pan troglodytes (Chimpanzee).